We begin with the raw amino-acid sequence, 166 residues long: Heme-degrading monooxygenase HmoB (166 aa).

Asn-33 contributes to the Fe cation binding site. Residues 66 to 153 form the ABM domain; sequence FAVLNNIAVT…SAGIDTTSIF (88 aa). His-138 provides a ligand contact to heme.

The protein belongs to the antibiotic biosynthesis monooxygenase family. As to quaternary structure, homodimer.

It localises to the cytoplasm. It carries out the reaction heme b + 3 reduced [NADPH--hemoprotein reductase] + 3 O2 = biliverdin IXalpha + CO + Fe(2+) + 3 oxidized [NADPH--hemoprotein reductase] + 3 H2O + H(+). In terms of biological role, catalyzes the oxidative degradation of the heme macrocyclic porphyrin ring in the presence of a suitable electron donor such as ascorbate or NADPH--cytochrome P450 reductase, with subsequent release of free iron. The polypeptide is Heme-degrading monooxygenase HmoB (hmoB) (Bacillus subtilis (strain 168)).